The following is a 220-amino-acid chain: Translin-1 (220 aa).

The protein belongs to the translin family. As to quaternary structure, forms an octameric ring-shaped structure, which is capable of binding DNA or RNA.

It localises to the cytoplasm. Its subcellular location is the nucleus. DNA-binding protein that specifically recognizes consensus sequences at the breakpoint junctions in chromosomal translocations. Selectively binds single-stranded d(GT)n and d(GTT)n microsatellite repeats. Has much higher affinities for the homologous RNA sequences (GU)n and (GUU)n. Does not bind double-stranded DNA. Has a role in meiosis. In Schizosaccharomyces pombe (strain 972 / ATCC 24843) (Fission yeast), this protein is Translin-1 (tsn1).